The primary structure comprises 242 residues: Uridylate kinase (242 aa).

Residue 16 to 19 participates in ATP binding; the sequence is KISG. The segment at 24 to 29 is involved in allosteric activation by GTP; sequence GDQGFG. Gly-58 serves as a coordination point for UMP. ATP is bound by residues Gly-59 and Arg-63. UMP-binding positions include Asp-78 and 139-146; that span reads TGNPYFTT. Thr-166, Tyr-172, and Asp-175 together coordinate ATP.

This sequence belongs to the UMP kinase family. As to quaternary structure, homohexamer.

Its subcellular location is the cytoplasm. It carries out the reaction UMP + ATP = UDP + ADP. Its pathway is pyrimidine metabolism; CTP biosynthesis via de novo pathway; UDP from UMP (UMPK route): step 1/1. Its activity is regulated as follows. Allosterically activated by GTP. Inhibited by UTP. In terms of biological role, catalyzes the reversible phosphorylation of UMP to UDP. The chain is Uridylate kinase from Roseobacter denitrificans (strain ATCC 33942 / OCh 114) (Erythrobacter sp. (strain OCh 114)).